The following is a 154-amino-acid chain: Myoglobin (154 aa).

Residues Gly-2–Lys-148 form the Globin domain. Ser-4 carries the phosphoserine modification. His-65 contacts nitrite. His-65 provides a ligand contact to O2. Position 68 is a phosphothreonine (Thr-68). Position 94 (His-94) interacts with heme b.

The protein belongs to the globin family. Monomeric.

It localises to the cytoplasm. Its subcellular location is the sarcoplasm. The catalysed reaction is Fe(III)-heme b-[protein] + nitric oxide + H2O = Fe(II)-heme b-[protein] + nitrite + 2 H(+). It carries out the reaction H2O2 + AH2 = A + 2 H2O. Functionally, monomeric heme protein which primary function is to store oxygen and facilitate its diffusion within muscle tissues. Reversibly binds oxygen through a pentacoordinated heme iron and enables its timely and efficient release as needed during periods of heightened demand. Depending on the oxidative conditions of tissues and cells, and in addition to its ability to bind oxygen, it also has a nitrite reductase activity whereby it regulates the production of bioactive nitric oxide. Under stress conditions, like hypoxia and anoxia, it also protects cells against reactive oxygen species thanks to its pseudoperoxidase activity. In Globicephala melas (Long-finned pilot whale), this protein is Myoglobin (MB).